The chain runs to 175 residues: NADH-ubiquinone oxidoreductase chain 6 (175 aa).

Transmembrane regions (helical) follow at residues 1–21 (MMTY…VGFS), 25–45 (SPIY…GIIM), 47–67 (FGGS…MLVV), 88–108 (TVMG…LYVL), and 149–169 (YGAW…LVIL).

Belongs to the complex I subunit 6 family. Core subunit of respiratory chain NADH dehydrogenase (Complex I) which is composed of 45 different subunits.

It is found in the mitochondrion inner membrane. The enzyme catalyses a ubiquinone + NADH + 5 H(+)(in) = a ubiquinol + NAD(+) + 4 H(+)(out). Its function is as follows. Core subunit of the mitochondrial membrane respiratory chain NADH dehydrogenase (Complex I) which catalyzes electron transfer from NADH through the respiratory chain, using ubiquinone as an electron acceptor. Essential for the catalytic activity and assembly of complex I. This chain is NADH-ubiquinone oxidoreductase chain 6 (MT-ND6), found in Equus caballus (Horse).